Reading from the N-terminus, the 247-residue chain is Small ribosomal subunit protein uS3 (247 aa).

In terms of domain architecture, KH type-2 spans 51–119 (VAKRDKRPAG…ELHLNIVEIR (69 aa)). Positions 224-233 (PSAHDRRQQE) are enriched in basic and acidic residues. The segment at 224 to 247 (PSAHDRRQQELQESGGASRPRRDR) is disordered.

This sequence belongs to the universal ribosomal protein uS3 family. Part of the 30S ribosomal subunit. Forms a tight complex with proteins S10 and S14.

Its function is as follows. Binds the lower part of the 30S subunit head. Binds mRNA in the 70S ribosome, positioning it for translation. The protein is Small ribosomal subunit protein uS3 of Jannaschia sp. (strain CCS1).